The chain runs to 181 residues: Ubiquitin-conjugating enzyme E2 19 (181 aa).

Polar residues predominate over residues 1–10 (MATVNGYTGN). Residues 1–33 (MATVNGYTGNTPAATTPAATGSKQSAPPTKTVD) form a disordered region. The segment covering 11–20 (TPAATTPAAT) has biased composition (low complexity). In terms of domain architecture, UBC core spans 36-181 (SVLKRLQSEL…VEKLYKPLNA (146 aa)). The Glycyl thioester intermediate role is filled by Cys-120.

The protein belongs to the ubiquitin-conjugating enzyme family. In terms of assembly, interacts with OR. Binds to LOT1. Expressed in all tissues with cell division activities and in mature leaves.

The protein localises to the cytoplasm. It localises to the nucleus. The enzyme catalyses S-ubiquitinyl-[E1 ubiquitin-activating enzyme]-L-cysteine + [E2 ubiquitin-conjugating enzyme]-L-cysteine = [E1 ubiquitin-activating enzyme]-L-cysteine + S-ubiquitinyl-[E2 ubiquitin-conjugating enzyme]-L-cysteine.. It participates in protein modification; protein ubiquitination. Functionally, accepts the ubiquitin from the E1 complex and catalyzes its covalent attachment to other proteins. Part of the anaphase-promoting complex (APC). May have a key function during cell cycle and be involved in cyclin B1 degradation. Triggers OR ubiquitination that mediates its subsequent nuclear localization. Involved in the repression of early light-induced proteins (ELIPs, e.g. ELIP1 and ELIP2) expression, probably via OR nuclear relocalization. The protein is Ubiquitin-conjugating enzyme E2 19 of Arabidopsis thaliana (Mouse-ear cress).